Here is a 226-residue protein sequence, read N- to C-terminus: Urease accessory protein UreF (226 aa).

It belongs to the UreF family. As to quaternary structure, ureD, UreF and UreG form a complex that acts as a GTP-hydrolysis-dependent molecular chaperone, activating the urease apoprotein by helping to assemble the nickel containing metallocenter of UreC. The UreE protein probably delivers the nickel.

The protein resides in the cytoplasm. Required for maturation of urease via the functional incorporation of the urease nickel metallocenter. In Burkholderia cenocepacia (strain HI2424), this protein is Urease accessory protein UreF.